A 463-amino-acid polypeptide reads, in one-letter code: Interleukin enhancer-binding factor 2 (463 aa).

Arginine 94 is subject to Asymmetric dimethylarginine; alternate. At arginine 94 the chain carries Omega-N-methylarginine; alternate. The DZF domain maps to 108–444; that stretch reads RHILAYDWLA…PEKKEGEEEE (337 aa). Arginine 145 bears the Omega-N-methylarginine mark. Lysine 166 is covalently cross-linked (Glycyl lysine isopeptide (Lys-Gly) (interchain with G-Cter in ubiquitin)). A phosphoserine mark is found at serine 173 and serine 189. Glycyl lysine isopeptide (Lys-Gly) (interchain with G-Cter in SUMO2) cross-links involve residues lysine 259 and lysine 437. The disordered stretch occupies residues 424-463; the sequence is VTPSEKAYEKPPEKKEGEEEEENTEEPPQGEEEESMETQE. Residues 429 to 440 are compositionally biased toward basic and acidic residues; it reads KAYEKPPEKKEG. The segment covering 441 to 463 has biased composition (acidic residues); the sequence is EEEEENTEEPPQGEEEESMETQE. Threonine 461 is subject to Phosphothreonine.

As to quaternary structure, forms heterodimers with ILF3. ILF2-ILF3 heterodimers may also bind to PRKDC/XRCC7: this may stabilize the interaction of PRKDC/XRCC7 and the heterodimeric complex of G22P1/KU70 and XRCC5/KU80. Forms a complex with ILF3, YLPM1, KHDRBS1, RBMX, NCOA5 and PPP1CA. Identified in a IGF2BP1-dependent mRNP granule complex containing untranslated mRNAs. Interacts with IGF2BP1. Interacts with CRBN; this interaction promotes ubiquitination and subsequent degradation of ILF2. In terms of processing, ubiquitinated at Lys-166 by CRBN with polyubiquitin chains by the CUL4-RING E3 ligase (CRL4-CRBN) and then degraded by the proteasome.

It localises to the nucleus. The protein localises to the nucleolus. Its subcellular location is the cytoplasm. Functionally, chromatin-interacting protein that forms a stable heterodimer with interleukin enhancer-binding factor 3/ILF3 and plays a role in several biological processes including transcription, innate immunity or cell growth. Essential for the efficient reshuttling of ILF3 (isoform 1 and isoform 2) into the nucleus. Together with ILF3, forms an RNA-binding complex that is required for mitotic progression and cytokinesis by regulating the expression of a cluster of mitotic genes. Mechanistically, competes with STAU1/STAU2-mediated mRNA decay. Plays also a role in the inhibition of various viruses including Japanese encephalitis virus or enterovirus 71. This is Interleukin enhancer-binding factor 2 (Ilf2) from Rattus norvegicus (Rat).